A 171-amino-acid polypeptide reads, in one-letter code: Small ribosomal subunit protein uS13 (171 aa).

Disordered regions lie at residues 1 to 22 and 142 to 171; these read MGKA…AAKK and RHEK…RKKE. Over residues 10–22 the composition is skewed to basic and acidic residues; sequence KSDKEAAKPAAKK. Basic residues predominate over residues 142–158; sequence RHEKGKKVRGQRTRSNG.

The protein belongs to the universal ribosomal protein uS13 family. As to quaternary structure, part of the 30S ribosomal subunit. Forms a loose heterodimer with protein S19. Forms two bridges to the 50S subunit in the 70S ribosome.

Its function is as follows. Located at the top of the head of the 30S subunit, it contacts several helices of the 16S rRNA. In the 70S ribosome it contacts the 23S rRNA (bridge B1a) and protein L5 of the 50S subunit (bridge B1b), connecting the 2 subunits; these bridges are implicated in subunit movement. The protein is Small ribosomal subunit protein uS13 of Thermoplasma volcanium (strain ATCC 51530 / DSM 4299 / JCM 9571 / NBRC 15438 / GSS1).